The following is a 621-amino-acid chain: MHHVRMVKLPAEASDPHALRSRARRSWLVFAAVALVLLAAGLLLARDYGRSQALAGLAGQSRIDASLKASLLRAVVERQRALPLVLADDAAIRGALLSPDRPSLDRINRKLEALATSAEAAVIYLIDRSGVAVAASNWQEPTSFVGNDYAFRDYFRLAVRDGMAEHFAMGTVSNRPGLYISRRVDGPGGPLGVIVAKLEFDGVEADWQASGKPAYVTDRRGIVLITSLPSWRFMTTKPIAEDRLAPIRESLQFGDAPLLPLPFRKIEARPDGSSTLDALLPGDSTAAFLRVETMVPSTNWRLEQLSPLKAPLAAGAREAQLLTLAALVPLLALAALLLRRRQVVAMRSAEERLARNALEASVEERTRDLRMARDRLETEIADHRQTTEKLQAVQQDLVQANRLAILGQVAAGVAHEINQPVATIRAYADNARTFLHRGQTVTAAENMESIAELTERVGAITDELRRFARKGHFAAGPTAMKEVVEGALMLLRSRFAGRMDAIRLDLPPDGLQALGNRIRLEQVLINLLQNALEAIGDSEDGAIQVRCEEAAGGIALTVADNGPGIAADVREELFTPFNTSKEDGLGLGLAISKEIVSDYGGTIEVESGPSGTTFAVNLKKA.

The Cytoplasmic segment spans residues 1–26 (MHHVRMVKLPAEASDPHALRSRARRS). A helical transmembrane segment spans residues 27-45 (WLVFAAVALVLLAAGLLLA). Residues 46 to 320 (RDYGRSQALA…PLAAGAREAQ (275 aa)) lie on the Periplasmic side of the membrane. A helical transmembrane segment spans residues 321-338 (LLTLAALVPLLALAALLL). Residues 339 to 621 (RRRQVVAMRS…TTFAVNLKKA (283 aa)) lie on the Cytoplasmic side of the membrane. Positions 412–621 (GVAHEINQPV…TTFAVNLKKA (210 aa)) constitute a Histidine kinase domain. The residue at position 415 (H415) is a Phosphohistidine; by autocatalysis.

In terms of processing, autophosphorylated.

Its subcellular location is the cell inner membrane. The enzyme catalyses ATP + protein L-histidine = ADP + protein N-phospho-L-histidine.. Its function is as follows. Member of the two-component regulatory system DctB/DctD involved in the transport of C4-dicarboxylates. DctB functions as a membrane-associated protein kinase that phosphorylates DctD in response to environmental signals. In Rhizobium meliloti (strain 1021) (Ensifer meliloti), this protein is C4-dicarboxylate transport sensor protein DctB (dctB).